A 102-amino-acid polypeptide reads, in one-letter code: Large ribosomal subunit protein uL24 (102 aa).

The protein belongs to the universal ribosomal protein uL24 family. Part of the 50S ribosomal subunit.

Its function is as follows. One of two assembly initiator proteins, it binds directly to the 5'-end of the 23S rRNA, where it nucleates assembly of the 50S subunit. One of the proteins that surrounds the polypeptide exit tunnel on the outside of the subunit. This Alcanivorax borkumensis (strain ATCC 700651 / DSM 11573 / NCIMB 13689 / SK2) protein is Large ribosomal subunit protein uL24.